Consider the following 96-residue polypeptide: LLNRLPNGLFRVCLDLIINYVSGKIRHSFIRILPGDRVKIEVSPYDSTKGRIIYRLHNKDLKDSFFNFTIPFVGIQFEMKNFKKLIFFQEIDSELR.

Residues I18–H57 form the S1-like domain.

It belongs to the IF-1 family. Component of the 30S ribosomal translation pre-initiation complex which assembles on the 30S ribosome in the order IF-2 and IF-3, IF-1 and N-formylmethionyl-tRNA(fMet); mRNA recruitment can occur at any time during PIC assembly.

Its subcellular location is the plastid. The protein localises to the chloroplast. Functionally, one of the essential components for the initiation of protein synthesis. Stabilizes the binding of IF-2 and IF-3 on the 30S subunit to which N-formylmethionyl-tRNA(fMet) subsequently binds. Helps modulate mRNA selection, yielding the 30S pre-initiation complex (PIC). Upon addition of the 50S ribosomal subunit IF-1, IF-2 and IF-3 are released leaving the mature 70S translation initiation complex. This chain is Putative translation initiation factor IF-1, chloroplastic (infA), found in Nicotiana tabacum (Common tobacco).